The following is a 341-amino-acid chain: Methionine import ATP-binding protein MetN (341 aa).

The 239-residue stretch at 9–247 folds into the ABC transporter domain; the sequence is ISVEQLNKEI…PQSAITEELF (239 aa). 41-48 is a binding site for ATP; sequence GHSGSGKS.

It belongs to the ABC transporter superfamily. Methionine importer (TC 3.A.1.24) family. In terms of assembly, the complex is composed of two ATP-binding proteins (MetN), two transmembrane proteins (MetI) and a solute-binding protein (MetQ).

The protein resides in the cell inner membrane. The enzyme catalyses L-methionine(out) + ATP + H2O = L-methionine(in) + ADP + phosphate + H(+). It carries out the reaction D-methionine(out) + ATP + H2O = D-methionine(in) + ADP + phosphate + H(+). Functionally, part of the ABC transporter complex MetNIQ involved in methionine import. Responsible for energy coupling to the transport system. This is Methionine import ATP-binding protein MetN from Chlamydia abortus (strain DSM 27085 / S26/3) (Chlamydophila abortus).